Reading from the N-terminus, the 351-residue chain is Thiamine-phosphate synthase (351 aa).

Residues 1-129 are unknown; sequence MVEPYSQQKQ…GQACKQMRYR (129 aa). The segment at 130-351 is thiamine-phosphate synthase; that stretch reads VYSLETNLMG…SQLNRIKPES (222 aa). 4-amino-2-methyl-5-(diphosphooxymethyl)pyrimidine-binding positions include 177 to 181 and Asn209; that span reads QYRDK. Mg(2+) contacts are provided by Asp210 and Asp229. Ser248 serves as a coordination point for 4-amino-2-methyl-5-(diphosphooxymethyl)pyrimidine. 274 to 276 is a binding site for 2-[(2R,5Z)-2-carboxy-4-methylthiazol-5(2H)-ylidene]ethyl phosphate; sequence TPT. Lys277 contacts 4-amino-2-methyl-5-(diphosphooxymethyl)pyrimidine. Gly304 provides a ligand contact to 2-[(2R,5Z)-2-carboxy-4-methylthiazol-5(2H)-ylidene]ethyl phosphate.

The protein belongs to the thiamine-phosphate synthase family. The cofactor is Mg(2+).

The enzyme catalyses 2-[(2R,5Z)-2-carboxy-4-methylthiazol-5(2H)-ylidene]ethyl phosphate + 4-amino-2-methyl-5-(diphosphooxymethyl)pyrimidine + 2 H(+) = thiamine phosphate + CO2 + diphosphate. It catalyses the reaction 2-(2-carboxy-4-methylthiazol-5-yl)ethyl phosphate + 4-amino-2-methyl-5-(diphosphooxymethyl)pyrimidine + 2 H(+) = thiamine phosphate + CO2 + diphosphate. The catalysed reaction is 4-methyl-5-(2-phosphooxyethyl)-thiazole + 4-amino-2-methyl-5-(diphosphooxymethyl)pyrimidine + H(+) = thiamine phosphate + diphosphate. The protein operates within cofactor biosynthesis; thiamine diphosphate biosynthesis; thiamine phosphate from 4-amino-2-methyl-5-diphosphomethylpyrimidine and 4-methyl-5-(2-phosphoethyl)-thiazole: step 1/1. Its function is as follows. Condenses 4-methyl-5-(beta-hydroxyethyl)thiazole monophosphate (THZ-P) and 2-methyl-4-amino-5-hydroxymethyl pyrimidine pyrophosphate (HMP-PP) to form thiamine monophosphate (TMP). This Nostoc sp. (strain PCC 7120 / SAG 25.82 / UTEX 2576) protein is Thiamine-phosphate synthase.